A 255-amino-acid chain; its full sequence is Probable transcriptional regulatory protein PCC8801_2028 (255 aa).

It belongs to the TACO1 family.

It localises to the cytoplasm. This chain is Probable transcriptional regulatory protein PCC8801_2028, found in Rippkaea orientalis (strain PCC 8801 / RF-1) (Cyanothece sp. (strain PCC 8801)).